Reading from the N-terminus, the 66-residue chain is Large ribosomal subunit protein bL33 (66 aa).

This sequence belongs to the bacterial ribosomal protein bL33 family.

The polypeptide is Large ribosomal subunit protein bL33 (Wolbachia pipientis wMel).